Consider the following 320-residue polypeptide: Phosphate acyltransferase (320 aa).

This sequence belongs to the PlsX family. Homodimer. Probably interacts with PlsY.

The protein resides in the cytoplasm. The enzyme catalyses a fatty acyl-[ACP] + phosphate = an acyl phosphate + holo-[ACP]. It participates in lipid metabolism; phospholipid metabolism. In terms of biological role, catalyzes the reversible formation of acyl-phosphate (acyl-PO(4)) from acyl-[acyl-carrier-protein] (acyl-ACP). This enzyme utilizes acyl-ACP as fatty acyl donor, but not acyl-CoA. The polypeptide is Phosphate acyltransferase (Chlamydia pneumoniae (Chlamydophila pneumoniae)).